Consider the following 301-residue polypeptide: MKKNYYEMEVSSKNASELFKNFSFELGVEAIEEKENSFIIRDEEDLQNLEFAFIEFQKALQKKFNTKIDLQISKSIKENADWIEKYQKSVEPIEVGKFYVRPSWKESKKELIDIIIDPAIAFGSGHHESTNMCLKLIDKYAKDGATALDVGCGSGILSIALKKIGLKVAACDTDIQAVDASIKNAQKNGVKIDKIWNGSIADANLAIRNMDGEILSENLNENKNFNQSFNKEFDFVIANIITDVILILQNELKNSVKSGGILIISGILEKYKNKILNVFSDMNNLEILQNGEWVSFVFKKG.

Thr-130, Gly-151, Asp-172, and Asn-239 together coordinate S-adenosyl-L-methionine.

The protein belongs to the methyltransferase superfamily. PrmA family.

The protein localises to the cytoplasm. The enzyme catalyses L-lysyl-[protein] + 3 S-adenosyl-L-methionine = N(6),N(6),N(6)-trimethyl-L-lysyl-[protein] + 3 S-adenosyl-L-homocysteine + 3 H(+). Methylates ribosomal protein L11. This Campylobacter hominis (strain ATCC BAA-381 / DSM 21671 / CCUG 45161 / LMG 19568 / NCTC 13146 / CH001A) protein is Ribosomal protein L11 methyltransferase.